Consider the following 1327-residue polypeptide: Putative ATP-dependent RNA helicase ucp12 (1327 aa).

Disordered regions lie at residues 1–58 (MGSK…KQLV) and 201–222 (QAARASSAAKPPPKASQKNEKV). Residues 18 to 41 (SKNKEKNIKGKKKNSLDPIEKNKQ) show a composition bias toward basic and acidic residues. Residues 42–58 (ETAGLQTTSRPTAKQLV) show a composition bias toward polar residues. The region spanning 276–315 (EPDTSIVNDLISLGFRDIHAKEACQYCVSLEDALEWLIIH) is the UBA domain. Residues 405 to 504 (DDVSALQSIL…NHLQENIEDF (100 aa)) enclose the RWD domain. One can recognise a Helicase ATP-binding domain in the interval 587–756 (MDAIQHSQVV…FGNAGHLHIH (170 aa)). 600–607 (GETGSGKS) contacts ATP. Positions 703–706 (DEVH) match the DEAH box motif. A Helicase C-terminal domain is found at 797 to 968 (LISRLVSSID…QVCLNVVPLV (172 aa)).

The protein belongs to the DEAD box helicase family. DEAH subfamily.

Its subcellular location is the cytoplasm. The catalysed reaction is ATP + H2O = ADP + phosphate + H(+). In terms of biological role, probable ATP-binding RNA helicase. The polypeptide is Putative ATP-dependent RNA helicase ucp12 (ucp12) (Schizosaccharomyces pombe (strain 972 / ATCC 24843) (Fission yeast)).